Consider the following 254-residue polypeptide: Thiazole synthase (254 aa).

Catalysis depends on lysine 93, which acts as the Schiff-base intermediate with DXP. 1-deoxy-D-xylulose 5-phosphate contacts are provided by residues glycine 154, 181-182 (AG), and 203-204 (NT).

This sequence belongs to the ThiG family. Homotetramer. Forms heterodimers with either ThiH or ThiS.

It localises to the cytoplasm. The enzyme catalyses [ThiS sulfur-carrier protein]-C-terminal-Gly-aminoethanethioate + 2-iminoacetate + 1-deoxy-D-xylulose 5-phosphate = [ThiS sulfur-carrier protein]-C-terminal Gly-Gly + 2-[(2R,5Z)-2-carboxy-4-methylthiazol-5(2H)-ylidene]ethyl phosphate + 2 H2O + H(+). It functions in the pathway cofactor biosynthesis; thiamine diphosphate biosynthesis. In terms of biological role, catalyzes the rearrangement of 1-deoxy-D-xylulose 5-phosphate (DXP) to produce the thiazole phosphate moiety of thiamine. Sulfur is provided by the thiocarboxylate moiety of the carrier protein ThiS. In vitro, sulfur can be provided by H(2)S. The protein is Thiazole synthase of Ruegeria pomeroyi (strain ATCC 700808 / DSM 15171 / DSS-3) (Silicibacter pomeroyi).